The following is a 359-amino-acid chain: Ribosomal RNA small subunit methyltransferase mra1 (359 aa).

Residues Met-1 to Arg-10 show a composition bias toward basic residues. Disordered stretches follow at residues Met-1–Glu-62 and Val-98–Arg-118. Ser-12 is modified (phosphoserine). The segment covering Lys-18–Thr-39 has biased composition (polar residues). Thr-33 is subject to Phosphothreonine. The residue at position 100 (Ser-100) is a Phosphoserine. Residues Leu-287, Gly-314, Gly-319 to Asp-321, and Ile-334 to Leu-339 each bind S-adenosyl-L-methionine.

This sequence belongs to the class IV-like SAM-binding methyltransferase superfamily. RNA methyltransferase NEP1 family. Homodimer.

It is found in the nucleus. Its subcellular location is the nucleolus. It carries out the reaction a pseudouridine in rRNA + S-adenosyl-L-methionine = an N(1)-methylpseudouridine in rRNA + S-adenosyl-L-homocysteine + H(+). Functionally, S-adenosyl-L-methionine-dependent pseudouridine N(1)-methyltransferase that methylates the pseudouridine corresponding to position 1189 (Psi1189) in S.cerevisiae 18S rRNA. Involved the biosynthesis of the hypermodified N1-methyl-N3-(3-amino-3-carboxypropyl) pseudouridine (m1acp3-Psi) conserved in eukaryotic 18S rRNA. Also has an essential role in 40S ribosomal subunit biogenesis independent on its methyltransferase activity, facilitating the incorporation of ribosomal protein S19 during the formation of pre-ribosomes. Essential for cell growth. It also has a key role in promoting the mating function. This Schizosaccharomyces pombe (strain 972 / ATCC 24843) (Fission yeast) protein is Ribosomal RNA small subunit methyltransferase mra1.